Consider the following 230-residue polypeptide: Ribonuclease HII (230 aa).

An RNase H type-2 domain is found at 28-217; the sequence is FRIAGIDEAG…VKEHLPSQPD (190 aa). Residues D34, E35, and D126 each contribute to the a divalent metal cation site. The tract at residues 209 to 230 is disordered; that stretch reads KEHLPSQPDSDTAGPSTGLFSF. The span at 215 to 230 shows a compositional bias: polar residues; sequence QPDSDTAGPSTGLFSF.

This sequence belongs to the RNase HII family. Requires Mn(2+) as cofactor. It depends on Mg(2+) as a cofactor.

The protein localises to the cytoplasm. The catalysed reaction is Endonucleolytic cleavage to 5'-phosphomonoester.. Its function is as follows. Endonuclease that specifically degrades the RNA of RNA-DNA hybrids. The protein is Ribonuclease HII of Citrifermentans bemidjiense (strain ATCC BAA-1014 / DSM 16622 / JCM 12645 / Bem) (Geobacter bemidjiensis).